A 272-amino-acid polypeptide reads, in one-letter code: MTDDVTNVEQPSTASEQQPQDVPAAEPSAAKKRRANKAKSKATAAAIEQRLGHSFADPSLLTTAFTHVSALKSARRTDSYQRLEFLGDHVLGLIVSDMLYRAFPDADEGELSKRLADLVRKETCADVARSLDLVEGIKLGTVGAGAGAKLRKSVLGDICEAVIGAIYLDGGYEAASDFVRRNWTERMRKPARSLRDPKTVLQEWAQARGLPTPVYREVERTGPHHDPQFRVAVILPGLEPAEGLGGSKRAAEKVAASAMLAREGVGTGGNDG.

The segment covering 1–20 has biased composition (polar residues); it reads MTDDVTNVEQPSTASEQQPQ. The disordered stretch occupies residues 1–38; it reads MTDDVTNVEQPSTASEQQPQDVPAAEPSAAKKRRANKA. The 128-residue stretch at 44–171 folds into the RNase III domain; sequence AAAIEQRLGH…VIGAIYLDGG (128 aa). Residue E84 participates in Mg(2+) binding. D88 is a catalytic residue. D157 and E160 together coordinate Mg(2+). Residue E160 is part of the active site. Residues 196–265 form the DRBM domain; it reads DPKTVLQEWA…ASAMLAREGV (70 aa).

This sequence belongs to the ribonuclease III family. As to quaternary structure, homodimer. It depends on Mg(2+) as a cofactor.

Its subcellular location is the cytoplasm. It carries out the reaction Endonucleolytic cleavage to 5'-phosphomonoester.. Digests double-stranded RNA. Involved in the processing of primary rRNA transcript to yield the immediate precursors to the large and small rRNAs (23S and 16S). Processes some mRNAs, and tRNAs when they are encoded in the rRNA operon. Processes pre-crRNA and tracrRNA of type II CRISPR loci if present in the organism. In Rhodopseudomonas palustris (strain ATCC BAA-98 / CGA009), this protein is Ribonuclease 3.